The sequence spans 580 residues: E3 ubiquitin-protein ligase TRIM45 (580 aa).

The segment at 29 to 98 (CPLCMGLFKA…QIGILCPVCD (70 aa)) adopts an RING-type zinc-finger fold. 2 B box-type zinc fingers span residues 130 to 176 (GQGL…MVDL) and 186 to 227 (GKPI…CDFT). The Zn(2+) site is built by C135, C138, C158, H162, C191, H194, C214, and H219. The stretch at 281–335 (SEGYIKAIEEHRDKLLKQLEDIRVQKENSLQLQKAQLEQLLADMRTGVEFTEHLL) forms a coiled coil. A Filamin repeat occupies 394-497 (TKEVDPAKCV…VQGSPFTVTV (104 aa)).

This sequence belongs to the TRIM/RBCC family.

It is found in the cytoplasm. The protein resides in the nucleus. It catalyses the reaction S-ubiquitinyl-[E2 ubiquitin-conjugating enzyme]-L-cysteine + [acceptor protein]-L-lysine = [E2 ubiquitin-conjugating enzyme]-L-cysteine + N(6)-ubiquitinyl-[acceptor protein]-L-lysine.. Its function is as follows. E3 ubiquitin-protein ligase that plays a role in the regulation of inflammatory response. Mechanistically, mediates the 'Lys-48'-linked polyubiquitination of TAB2, a regulatory protein of the kinase TAK1, leading to its degradation via the proteasomal pathway and inhibition of the TLR-mediated inflammatory immune response. May act as a transcriptional repressor in mitogen-activated protein kinase signaling pathway. In Bos taurus (Bovine), this protein is E3 ubiquitin-protein ligase TRIM45 (TRIM45).